We begin with the raw amino-acid sequence, 386 residues long: Caspase-12 (386 aa).

Positions 1-91 (MAGKRQSQDP…LLSLKSHAEN (91 aa)) constitute a CARD domain. At Ser-84 the chain carries Phosphoserine. Residues His-218 and Cys-266 contribute to the active site.

Belongs to the peptidase C14A family. In terms of assembly, heterotetramer that consists of two anti-parallel arranged heterodimers, each one formed by two subunits (Potential). May interact with TRAF2.

In terms of biological role, involved in the activation cascade of caspases responsible for apoptosis execution. The chain is Caspase-12 from Canis lupus familiaris (Dog).